The following is a 552-amino-acid chain: Nucleolar complex protein 4 (552 aa).

It belongs to the CBF/MAK21 family. Interacts with NOP14 and MPP10. Interacts with snoRNA U3. Component of the ribosomal small subunit (SSU) processome composed of at least 40 protein subunits and snoRNA U3.

The protein resides in the nucleus. Its subcellular location is the nucleolus. Involved in nucleolar processing of pre-18S ribosomal RNA and ribosome assembly. Has a role in the nuclear export of 40S pre-ribosomal subunit to the cytoplasm. Its subcellular location and association with pre-40S subunit are unaffected by RPS19 disruptions, suggesting it acts before the ribosomal protein. The sequence is that of Nucleolar complex protein 4 (NOC4) from Saccharomyces cerevisiae (strain ATCC 204508 / S288c) (Baker's yeast).